The sequence spans 375 residues: Queuine tRNA-ribosyltransferase (375 aa).

The Proton acceptor role is filled by D90. Substrate contacts are provided by residues 90–94 (DSGGF), D144, Q190, and G217. The RNA binding stretch occupies residues 248–254 (GIGTPHY). Catalysis depends on D267, which acts as the Nucleophile. The RNA binding; important for wobble base 34 recognition stretch occupies residues 272–276 (TRIAR). 4 residues coordinate Zn(2+): C305, C307, C310, and H336.

The protein belongs to the queuine tRNA-ribosyltransferase family. In terms of assembly, homodimer. Within each dimer, one monomer is responsible for RNA recognition and catalysis, while the other monomer binds to the replacement base PreQ1. It depends on Zn(2+) as a cofactor.

It carries out the reaction 7-aminomethyl-7-carbaguanine + guanosine(34) in tRNA = 7-aminomethyl-7-carbaguanosine(34) in tRNA + guanine. It functions in the pathway tRNA modification; tRNA-queuosine biosynthesis. In terms of biological role, catalyzes the base-exchange of a guanine (G) residue with the queuine precursor 7-aminomethyl-7-deazaguanine (PreQ1) at position 34 (anticodon wobble position) in tRNAs with GU(N) anticodons (tRNA-Asp, -Asn, -His and -Tyr). Catalysis occurs through a double-displacement mechanism. The nucleophile active site attacks the C1' of nucleotide 34 to detach the guanine base from the RNA, forming a covalent enzyme-RNA intermediate. The proton acceptor active site deprotonates the incoming PreQ1, allowing a nucleophilic attack on the C1' of the ribose to form the product. After dissociation, two additional enzymatic reactions on the tRNA convert PreQ1 to queuine (Q), resulting in the hypermodified nucleoside queuosine (7-(((4,5-cis-dihydroxy-2-cyclopenten-1-yl)amino)methyl)-7-deazaguanosine). In Borrelia duttonii (strain Ly), this protein is Queuine tRNA-ribosyltransferase.